Reading from the N-terminus, the 167-residue chain is Transcription antitermination protein NusB (167 aa).

The disordered stretch occupies residues 1–21 (MIPTDTAPPSKPAQGHKGYKN).

Belongs to the NusB family.

Its function is as follows. Involved in transcription antitermination. Required for transcription of ribosomal RNA (rRNA) genes. Binds specifically to the boxA antiterminator sequence of the ribosomal RNA (rrn) operons. The protein is Transcription antitermination protein NusB of Nitrosomonas eutropha (strain DSM 101675 / C91 / Nm57).